The chain runs to 285 residues: Mitochondrial substrate carrier family protein L (285 aa).

The Mitochondrial intermembrane segment spans residues 1–13; that stretch reads MIASKETKEKIRN. Solcar repeat units lie at residues 8 to 94, 103 to 185, and 193 to 282; these read KEKI…VKSK, ISLG…AQRY, and MTMG…VMKF. A helical transmembrane segment spans residues 14-34; that stretch reads FIGGFASGAASTLAGHPFDTL. The Mitochondrial matrix portion of the chain corresponds to 35–69; sequence KVRLQTEGSTGRFRGLAHCFTTTIKEEGFFALYKG. The helical transmembrane segment at 70–90 threads the bilayer; that stretch reads VTPPLLGMSIINSCMFGAMNI. Residues 91–102 lie on the Mitochondrial intermembrane side of the membrane; that stretch reads VKSKIHTDKSTP. The helical transmembrane segment at 103–123 threads the bilayer; the sequence is ISLGEIMVSGAITGWIVSFVA. Residues 124–156 lie on the Mitochondrial matrix side of the membrane; that stretch reads CPIETVKSKLQVQYTGVKLYNGPIDCIKKIGIR. Residues 157–177 form a helical membrane-spanning segment; that stretch reads GLYKALIPTGFQRNSLYAYFG. At 178 to 198 the chain is on the mitochondrial intermembrane side; that stretch reads CYELAQRYLRREDGSMTMGRS. A helical transmembrane segment spans residues 199 to 219; sequence FIAGGIAGTGFWLTNFPFDVI. At 220–256 the chain is on the mitochondrial matrix side; sequence RSRIMTMPYNESPPRYKGMIDCAKHIYRVDGLKGFWK. A helical transmembrane segment spans residues 257 to 277; that stretch reads GFSPCLLRTFPANGATFVAYE. The Mitochondrial intermembrane portion of the chain corresponds to 278–285; sequence CVMKFFPM.

It belongs to the mitochondrial carrier (TC 2.A.29) family.

It is found in the mitochondrion inner membrane. In terms of biological role, mitochondrial solute carriers shuttle metabolites, nucleotides, and cofactors through the mitochondrial inner membrane. This chain is Mitochondrial substrate carrier family protein L (mcfL), found in Dictyostelium discoideum (Social amoeba).